The primary structure comprises 181 residues: ATP-dependent protease subunit HslV (181 aa).

Thr7 is a catalytic residue. Na(+)-binding residues include Ala166, Cys169, and Thr172.

It belongs to the peptidase T1B family. HslV subfamily. A double ring-shaped homohexamer of HslV is capped on each side by a ring-shaped HslU homohexamer. The assembly of the HslU/HslV complex is dependent on binding of ATP.

The protein resides in the cytoplasm. The catalysed reaction is ATP-dependent cleavage of peptide bonds with broad specificity.. Its activity is regulated as follows. Allosterically activated by HslU binding. In terms of biological role, protease subunit of a proteasome-like degradation complex believed to be a general protein degrading machinery. The protein is ATP-dependent protease subunit HslV of Anaeromyxobacter sp. (strain Fw109-5).